Reading from the N-terminus, the 323-residue chain is UPF0612 protein C569.01c (323 aa).

Coiled coils occupy residues 27-63 and 131-225; these read IKRYERSVDSTLLEIDENKREALEKYIEERDRKMKYE and NEMN…DARS.

Belongs to the UPF0612 family.

In Schizosaccharomyces pombe (strain 972 / ATCC 24843) (Fission yeast), this protein is UPF0612 protein C569.01c.